We begin with the raw amino-acid sequence, 180 residues long: uncharacterized protein (180 aa).

Residues 114 to 136 (DKISESDSLPDEYKEYVVKHDSD) show a composition bias toward basic and acidic residues. The interval 114 to 180 (DKISESDSLP…NFDNPDDNPK (67 aa)) is disordered. Over residues 137 to 146 (NSDNDSDNSD) the composition is skewed to acidic residues. Residues 147–173 (NDSNNSDNDSNNSDSDSDNSNDPNNFD) are compositionally biased toward low complexity.

This is an uncharacterized protein from Acanthamoeba polyphaga (Amoeba).